A 542-amino-acid polypeptide reads, in one-letter code: Importin subunit alpha (542 aa).

At M1 the chain carries N-acetylmethionine. The span at 1–11 (MDNGTDSSTSK) shows a compositional bias: polar residues. The region spanning 1 to 65 (MDNGTDSSTS…RNFIPPTDGA (65 aa)) is the IBB domain. A disordered region spans residues 1–77 (MDNGTDSSTS…DEEDESSVSA (77 aa)). Residues 27–53 (FSADELRRRRDTQQVELRKAKRDEALA) are compositionally biased toward basic and acidic residues. An ARM 1; truncated repeat occupies 89 to 122 (LPQMTQQLNSDDMQEQLSATVKFRQILSREHRPP). 8 ARM repeats span residues 123–162 (IDVV…ASGT), 163–204 (SAQT…AGDS), 205–251 (TDYR…PQPD), 252–288 (WSVV…SDGP), 289–330 (QEAI…VTGN), 331–372 (DLQT…TAGN), 373–417 (TEQI…GLQR), and 418–471 (PDII…LNIN). An NLS binding site 1 region spans residues 209–335 (DYVLQCNAME…IVTGNDLQTQ (127 aa)). An NLS binding site 2 region spans residues 419–505 (DIIRYLVSQG…KIYEKAYKII (87 aa)). One copy of the ARM 10; atypical repeat lies at 472–508 (ENADFIEKAGGMEKIFNCQQNENDKIYEKAYKIIETY).

The protein belongs to the importin alpha family. In terms of assembly, forms a complex with an importin beta subunit. In the nucleus, interacts with NUP2 which accelerate release of NLSs, NUP2 is subsequently displaced by CSE1:RanGTP which mediates re-export and recycling. Interacts with HEH2, SHE2, and STS1.

It localises to the cytoplasm. The protein resides in the perinuclear region. Its function is as follows. Functions in nuclear protein import as an adapter protein for importin beta nuclear receptors. Binds specifically and directly to substrates containing either a simple or bipartite NLS motif. Promotes docking of import substrates to the nuclear envelope. Together with importin beta KAP95, mediates nuclear import of transcription factor GCN4. Together with tethering factor STS1, targets the proteasome to the nucleus. The chain is Importin subunit alpha (SRP1) from Saccharomyces cerevisiae (strain ATCC 204508 / S288c) (Baker's yeast).